The following is a 178-amino-acid chain: MSAMSAPSDELVVIGKIVSVHGVRGDVKVYSFTDPIDNLLDYRRWTLRRGDEVKQVELVKGRLQGKILVASLKGLTDREVARTYADFEICVPRSELPALDDGEYYWYQLQGLKVLNQAGQLLGQVDHLLETGANDVLVVKPCAGSLDDRERLLPYTDHCVLKVDLDSGEMQVDWDADF.

The PRC barrel domain maps to 101 to 178; that stretch reads DGEYYWYQLQ…EMQVDWDADF (78 aa).

Belongs to the RimM family. Binds ribosomal protein uS19.

The protein resides in the cytoplasm. In terms of biological role, an accessory protein needed during the final step in the assembly of 30S ribosomal subunit, possibly for assembly of the head region. Essential for efficient processing of 16S rRNA. May be needed both before and after RbfA during the maturation of 16S rRNA. It has affinity for free ribosomal 30S subunits but not for 70S ribosomes. This is Ribosome maturation factor RimM from Stutzerimonas stutzeri (strain A1501) (Pseudomonas stutzeri).